The following is a 290-amino-acid chain: MRIADYSVTKAVLERHGFTFKKSFGQNFLTDTNILQKIVDTAEIDDQVNVIEIGPGIGALTEFLAERAAQVMAFEIDHRLVPILVDTLRDFDNVTVVNEDILKVDLAQHIQNFKNPNLPIKVVANLPYYITTPILMHLIESGIPFCEFVVMMQKEVADRISAQPNTKAYGSLSIAVQYYMTAKVAFIVPRTVFVPAPNVDSAILKMVRRPEPAVAVEDENFFFKVSKASFTHRRKTLWNNLTGYFGKTEEVKDKLTKALDQAGLSPSVRGEALSLAEFAGLADALKGQGL.

S-adenosyl-L-methionine-binding residues include N27, L29, G54, E75, D100, and N125.

This sequence belongs to the class I-like SAM-binding methyltransferase superfamily. rRNA adenine N(6)-methyltransferase family. RsmA subfamily.

It is found in the cytoplasm. It catalyses the reaction adenosine(1518)/adenosine(1519) in 16S rRNA + 4 S-adenosyl-L-methionine = N(6)-dimethyladenosine(1518)/N(6)-dimethyladenosine(1519) in 16S rRNA + 4 S-adenosyl-L-homocysteine + 4 H(+). Functionally, specifically dimethylates two adjacent adenosines (A1518 and A1519) in the loop of a conserved hairpin near the 3'-end of 16S rRNA in the 30S particle. May play a critical role in biogenesis of 30S subunits. The chain is Ribosomal RNA small subunit methyltransferase A from Streptococcus pneumoniae (strain Hungary19A-6).